The chain runs to 299 residues: Phosphoribosylaminoimidazole-succinocarboxamide synthase (299 aa).

The protein belongs to the SAICAR synthetase family.

It carries out the reaction 5-amino-1-(5-phospho-D-ribosyl)imidazole-4-carboxylate + L-aspartate + ATP = (2S)-2-[5-amino-1-(5-phospho-beta-D-ribosyl)imidazole-4-carboxamido]succinate + ADP + phosphate + 2 H(+). The protein operates within purine metabolism; IMP biosynthesis via de novo pathway; 5-amino-1-(5-phospho-D-ribosyl)imidazole-4-carboxamide from 5-amino-1-(5-phospho-D-ribosyl)imidazole-4-carboxylate: step 1/2. The sequence is that of Phosphoribosylaminoimidazole-succinocarboxamide synthase from Maridesulfovibrio salexigens (strain ATCC 14822 / DSM 2638 / NCIMB 8403 / VKM B-1763) (Desulfovibrio salexigens).